The primary structure comprises 158 residues: Transcription elongation factor GreA (158 aa).

The protein belongs to the GreA/GreB family.

Its function is as follows. Necessary for efficient RNA polymerase transcription elongation past template-encoded arresting sites. The arresting sites in DNA have the property of trapping a certain fraction of elongating RNA polymerases that pass through, resulting in locked ternary complexes. Cleavage of the nascent transcript by cleavage factors such as GreA or GreB allows the resumption of elongation from the new 3'terminus. GreA releases sequences of 2 to 3 nucleotides. This chain is Transcription elongation factor GreA, found in Psychrobacter cryohalolentis (strain ATCC BAA-1226 / DSM 17306 / VKM B-2378 / K5).